We begin with the raw amino-acid sequence, 549 residues long: SET and MYND domain-containing protein DDB_G0277331 (549 aa).

Positions 27–283 (KGIELRYCDG…KDEELFINYS (257 aa)) constitute an SET domain. Zn(2+)-binding residues include cysteine 71, cysteine 74, cysteine 90, cysteine 93, cysteine 99, cysteine 103, histidine 111, and cysteine 115. Residues 71–115 (CDECLKNKLDLEEGKTLKRCSNCKLVYYCSTDCQTKAWKIHKQEC) form an MYND-type zinc finger. Positions 340 to 401 (NINNNNNNNN…IIKNLQNKLS (62 aa)) form a coiled coil.

This sequence belongs to the class V-like SAM-binding methyltransferase superfamily.

In terms of biological role, probable methyltransferase. This is SET and MYND domain-containing protein DDB_G0277331 from Dictyostelium discoideum (Social amoeba).